The primary structure comprises 142 residues: Large ribosomal subunit protein uL13 (142 aa).

The protein belongs to the universal ribosomal protein uL13 family. In terms of assembly, part of the 50S ribosomal subunit.

Functionally, this protein is one of the early assembly proteins of the 50S ribosomal subunit, although it is not seen to bind rRNA by itself. It is important during the early stages of 50S assembly. The chain is Large ribosomal subunit protein uL13 from Bordetella avium (strain 197N).